Consider the following 206-residue polypeptide: Histidine biosynthesis bifunctional protein HisIE (206 aa).

Residues 1–117 (MGSNEVATGD…SCFPSAPGQF (117 aa)) form a phosphoribosyl-AMP cyclohydrolase region. Residues 118 to 206 (LGSLDALVAE…AAALLESRHQ (89 aa)) form a phosphoribosyl-ATP pyrophosphohydrolase region.

The protein in the N-terminal section; belongs to the PRA-CH family. It in the C-terminal section; belongs to the PRA-PH family.

The protein resides in the cytoplasm. The catalysed reaction is 1-(5-phospho-beta-D-ribosyl)-ATP + H2O = 1-(5-phospho-beta-D-ribosyl)-5'-AMP + diphosphate + H(+). The enzyme catalyses 1-(5-phospho-beta-D-ribosyl)-5'-AMP + H2O = 1-(5-phospho-beta-D-ribosyl)-5-[(5-phospho-beta-D-ribosylamino)methylideneamino]imidazole-4-carboxamide. Its pathway is amino-acid biosynthesis; L-histidine biosynthesis; L-histidine from 5-phospho-alpha-D-ribose 1-diphosphate: step 2/9. It participates in amino-acid biosynthesis; L-histidine biosynthesis; L-histidine from 5-phospho-alpha-D-ribose 1-diphosphate: step 3/9. In Xanthomonas axonopodis pv. citri (strain 306), this protein is Histidine biosynthesis bifunctional protein HisIE.